The sequence spans 148 residues: UPF0756 membrane protein NMA2160 (148 aa).

Helical transmembrane passes span 13–35 (LILLGVVSNNNSITISATILLLM), 50–70 (HGLNLGIILLTIGVLSPLVSG), 80–100 (FLNFKMISAVFIGIFVAWLAG), and 121–141 (VIGVAFMGGIPVGPLIAAGIL).

Belongs to the UPF0756 family.

Its subcellular location is the cell membrane. The protein is UPF0756 membrane protein NMA2160 of Neisseria meningitidis serogroup A / serotype 4A (strain DSM 15465 / Z2491).